Here is a 159-residue protein sequence, read N- to C-terminus: UPF0262 protein CCNA_02430 (159 aa).

Belongs to the UPF0262 family.

This Caulobacter vibrioides (strain NA1000 / CB15N) (Caulobacter crescentus) protein is UPF0262 protein CCNA_02430.